A 306-amino-acid polypeptide reads, in one-letter code: D-alanine--D-alanine ligase (306 aa).

Residues glutamate 18 and serine 150 contribute to the active site. Positions 104-303 constitute an ATP-grasp domain; it reads KMLWKAFGLP…FEQLVVKILE (200 aa). ATP is bound at residue 134 to 189; it reads VAKLGLPLMVKPSLEGSSVGLTKVKAVEELKSAVEYALKFDNTILIEEWLAGDELT. The Mg(2+) site is built by aspartate 257, glutamate 270, and asparagine 272. Serine 281 is a catalytic residue.

It belongs to the D-alanine--D-alanine ligase family. Mg(2+) is required as a cofactor. Mn(2+) serves as cofactor.

The protein resides in the cytoplasm. It catalyses the reaction 2 D-alanine + ATP = D-alanyl-D-alanine + ADP + phosphate + H(+). The protein operates within cell wall biogenesis; peptidoglycan biosynthesis. Its function is as follows. Cell wall formation. The protein is D-alanine--D-alanine ligase of Haemophilus influenzae (strain ATCC 51907 / DSM 11121 / KW20 / Rd).